We begin with the raw amino-acid sequence, 821 residues long: Frameshifted structural polyprotein (821 aa).

The segment at 1–106 is disordered; that stretch reads MNRGFFNMLG…KPKPGKRQRM (106 aa). Residues 38-49 are compositionally biased toward polar residues; that stretch reads LASQIQQLTTAV. Over residues 67-106 the composition is skewed to basic residues; the sequence is PPPRQKKQAPKQPPKPKKPKTQEKKKKQPAKPKPGKRQRM. The ribosome-binding stretch occupies residues 93-101; sequence KQPAKPKPG. The Peptidase S3 domain occupies 114–264; that stretch reads RLFDVKNEDG…KTTPEGTEEW (151 aa). Residues His-141, Asp-163, and Ser-215 each act as charge relay system in the active site. The segment at 265–279 is functions as an uncleaved signal peptide for the precursor of protein E3/E2; that stretch reads SAAPLVTAMCLLGNV. Residue Asn-278 is glycosylated (N-linked (GlcNAc...) asparagine; by host). Cysteines 283 and 289 form a disulfide. 2 N-linked (GlcNAc...) asparagine; by host glycosylation sites follow: Asn-524 and Asn-646. A helical membrane pass occupies residues 696–716; that stretch reads ILAVASATVAMMIGVTVAVLC. Residues Cys-724, Cys-744, and Cys-745 are each lipidated (S-palmitoyl cysteine; by host). Helical transmembrane passes span 726–746 and 764–784; these read TPYALAPNAVIPTSLALLCCV and NSQPFFWVQLCIPLAAFIVLM.

This sequence belongs to the alphavirus frameshifted structural polyprotein family. As to quaternary structure, homomultimer. Interacts with host karyopherin KPNA4; this interaction allows the nuclear import of the viral capsid protein. Interacts with spike glycoprotein E2. Interacts with host IRAK1; the interaction leads to inhibition of IRAK1-dependent signaling. In terms of assembly, the precursor of protein E3/E2 and E1 form a heterodimer shortly after synthesis. Processing of the precursor of protein E3/E2 into E2 and E3 results in a heterodimer of the spike glycoproteins E2 and E1. Spike at virion surface are constituted of three E2-E1 heterodimers. Specific enzymatic cleavages in vivo yield mature proteins. Capsid protein is auto-cleaved during polyprotein translation, unmasking a signal peptide at the N-terminus of the precursor of E3/E2. The remaining polyprotein is then targeted to the host endoplasmic reticulum, where host signal peptidase cleaves it into pE2 and TF. pE2 is further processed to mature E3 and E2 by host furin in trans-Golgi vesicle. Post-translationally, palmitoylated via thioester bonds. These palmitoylations may induce disruption of the C-terminus transmembrane. This would result in the reorientation of E2 C-terminus from lumenal to cytoplasmic side. In terms of processing, palmitoylated via thioester bonds.

Its subcellular location is the virion. It localises to the host cytoplasm. The protein localises to the host cell membrane. The protein resides in the host nucleus. It is found in the virion membrane. The catalysed reaction is Autocatalytic release of the core protein from the N-terminus of the togavirus structural polyprotein by hydrolysis of a -Trp-|-Ser- bond.. In terms of biological role, forms an icosahedral capsid with a T=4 symmetry composed of 240 copies of the capsid protein surrounded by a lipid membrane through which penetrate 80 spikes composed of trimers of E1-E2 heterodimers. The capsid protein binds to the viral RNA genome at a site adjacent to a ribosome binding site for viral genome translation following genome release. Possesses a protease activity that results in its autocatalytic cleavage from the nascent structural protein. Following its self-cleavage, the capsid protein transiently associates with ribosomes, and within several minutes the protein binds to viral RNA and rapidly assembles into icosahedric core particles. The resulting nucleocapsid eventually associates with the cytoplasmic domain of the spike glycoprotein E2 at the cell membrane, leading to budding and formation of mature virions. In case of infection, new virions attach to target cells and after clathrin-mediated endocytosis their membrane fuses with the host endosomal membrane. This leads to the release of the nucleocapsid into the cytoplasm, followed by an uncoating event necessary for the genomic RNA to become accessible. The uncoating might be triggered by the interaction of capsid proteins with ribosomes. Binding of ribosomes would release the genomic RNA since the same region is genomic RNA-binding and ribosome-binding. Specifically inhibits interleukin-1 receptor-associated kinase 1/IRAK1-dependent signaling during viral entry, representing a means by which the alphaviruses may evade innate immune detection and activation prior to viral gene expression. Functionally, provides the signal sequence for the translocation of the precursor of protein E3/E2 to the host endoplasmic reticulum. Furin-cleaved E3 remains associated with spike glycoprotein E1 and mediates pH protection of the latter during the transport via the secretory pathway. After virion release from the host cell, the assembly protein E3 is gradually released in the extracellular space. Its function is as follows. Plays an essential role in viral attachment to target host cell, by binding to the cell receptor. Synthesized as a pE2 precursor which is processed by furin at the cell membrane just before virion budding, giving rise to E2-E1 heterodimer. The pE2-E1 heterodimer is stable, whereas E2-E1 is unstable and dissociate at low pH. pE2 is processed at the last step, presumably to avoid E1 fusion activation before its final export to cell surface. E2 C-terminus contains a transitory transmembrane that would be disrupted by palmitoylation, resulting in reorientation of the C-terminal tail from lumenal to cytoplasmic side. This step is critical since E2 C-terminus is involved in budding by interacting with capsid proteins. This release of E2 C-terminus in cytoplasm occurs lately in protein export, and precludes premature assembly of particles at the endoplasmic reticulum membrane. Plays a role in viral assembly and release. In Sindbis virus (SINV), this protein is Frameshifted structural polyprotein.